A 337-amino-acid polypeptide reads, in one-letter code: Beta-ketoacyl-[acyl-carrier-protein] synthase III (337 aa).

Residues C119 and H260 contribute to the active site. The ACP-binding stretch occupies residues Q261–R265. N290 is an active-site residue.

The protein belongs to the thiolase-like superfamily. FabH family. In terms of assembly, homodimer.

The protein resides in the cytoplasm. The catalysed reaction is malonyl-[ACP] + acetyl-CoA + H(+) = 3-oxobutanoyl-[ACP] + CO2 + CoA. The protein operates within lipid metabolism; fatty acid biosynthesis. Its function is as follows. Catalyzes the condensation reaction of fatty acid synthesis by the addition to an acyl acceptor of two carbons from malonyl-ACP. Catalyzes the first condensation reaction which initiates fatty acid synthesis and may therefore play a role in governing the total rate of fatty acid production. Possesses both acetoacetyl-ACP synthase and acetyl transacylase activities. Its substrate specificity determines the biosynthesis of branched-chain and/or straight-chain of fatty acids. The sequence is that of Beta-ketoacyl-[acyl-carrier-protein] synthase III from Synechococcus sp. (strain WH7803).